The following is a 259-amino-acid chain: Tonin (259 aa).

Positions Met-1 to Ala-18 are cleaved as a signal peptide. Residues Pro-19 to Arg-24 constitute a propeptide, activation peptide. The Peptidase S1 domain occupies Ile-25–Lys-256. 5 disulfide bridges follow: Cys-31/Cys-171, Cys-48/Cys-64, Cys-150/Cys-217, Cys-182/Cys-196, and Cys-207/Cys-232. His-63 functions as the Charge relay system in the catalytic mechanism. His-63 provides a ligand contact to Zn(2+). N-linked (GlcNAc...) asparagine glycosylation is present at Asn-106. The Zn(2+) site is built by His-113 and His-115. The active-site Charge relay system is Asp-118. Asn-189 carries N-linked (GlcNAc...) asparagine glycosylation. Catalysis depends on Ser-211, which acts as the Charge relay system.

It belongs to the peptidase S1 family. Kallikrein subfamily. In terms of assembly, monomer. Zn(2+) is required as a cofactor. In terms of tissue distribution, found in submaxillary gland.

It carries out the reaction Preferential cleavage of Arg-|-Xaa bonds in small molecule substrates. Highly selective action to release kallidin (lysyl-bradykinin) from kininogen involves hydrolysis of Met-|-Xaa or Leu-|-Xaa.. Its function is as follows. This protein has both trypsin- and chymotrypsin-like activities, being able to release angiotensin II from angiotensin I or angiotensinogen. In Rattus norvegicus (Rat), this protein is Tonin (Klk2).